The following is a 1013-amino-acid chain: Tolloid-like protein 1 (1013 aa).

The first 30 residues, 1-30, serve as a signal peptide directing secretion; sequence MGLGTLSPRMLVWLVASGIVFYGELWVCAG. Positions 31–147 are excised as a propeptide; sequence LDYDYTFDGN…GQNEKNRVPR (117 aa). The Peptidase M12A domain maps to 148-347; that stretch reads AATSRTERIW…AQARKLYRCP (200 aa). Asparagine 169 carries N-linked (GlcNAc...) asparagine glycosylation. Disulfide bonds link cysteine 190/cysteine 346, cysteine 210/cysteine 232, cysteine 212/cysteine 213, and cysteine 349/cysteine 375. Histidine 240 provides a ligand contact to Zn(2+). The active site involves glutamate 241. Histidine 244 and histidine 250 together coordinate Zn(2+). 2 CUB domains span residues 349 to 461 and 462 to 574; these read CGET…YEAI and CGGE…FFKE. N-linked (GlcNAc...) asparagine glycans are attached at residues asparagine 359 and asparagine 390. 15 disulfide bridges follow: cysteine 402/cysteine 424, cysteine 462/cysteine 488, cysteine 515/cysteine 537, cysteine 578/cysteine 590, cysteine 586/cysteine 599, cysteine 601/cysteine 614, cysteine 618/cysteine 644, cysteine 671/cysteine 693, cysteine 734/cysteine 745, cysteine 741/cysteine 754, cysteine 756/cysteine 769, cysteine 774/cysteine 800, cysteine 827/cysteine 849, cysteine 887/cysteine 917, and cysteine 944/cysteine 966. Positions 574 to 615 constitute an EGF-like 1; calcium-binding domain; that stretch reads EEDECAKPDRGGCEQRCLNTLGSYQCACEPGYELGPDRRSCE. In terms of domain architecture, CUB 3 spans 618-730; that stretch reads CGGLLTKLNG…KGFKAHFFSD (113 aa). N-linked (GlcNAc...) asparagine glycosylation is present at asparagine 626. Residues 730-770 form the EGF-like 2; calcium-binding domain; sequence DKDECSKDNGGCQHECVNTMGSYMCQCRNGFVLHDNKHDCK. CUB domains follow at residues 774–886 and 887–1003; these read CEQK…HSTE and CGGR…YKSI.

Requires Zn(2+) as cofactor.

The protein localises to the secreted. Functionally, protease which processes procollagen C-propeptides, such as chordin, pro-biglycan and pro-lysyl oxidase. Required for the embryonic development. Predominant protease, which in the development, influences dorsal-ventral patterning and skeletogenesis. The polypeptide is Tolloid-like protein 1 (TLL1) (Homo sapiens (Human)).